The chain runs to 45 residues: Gene 78 protein (45 aa).

Basic and acidic residues predominate over residues 1-14 (MKKMSDQLKARLEL). The tract at residues 1-45 (MKKMSDQLKARLELRLSNAAQPHRNRKREMKRPGKGNRNNWKKEY) is disordered. The span at 23–35 (HRNRKREMKRPGK) shows a compositional bias: basic residues.

This Mycobacterium phage L5 (Mycobacteriophage L5) protein is Gene 78 protein (78).